Reading from the N-terminus, the 612-residue chain is uncharacterized protein (612 aa).

The interval 171 to 217 is disordered; it reads MLPPSLVQRNNATTSPTTDSASENNESVPSLTSSVSTSSSVYSSWNP. Over residues 177-196 the composition is skewed to polar residues; it reads VQRNNATTSPTTDSASENNE. Low complexity predominate over residues 197–214; it reads SVPSLTSSVSTSSSVYSS.

To yeast YNL018c.

This is an uncharacterized protein from Saccharomyces cerevisiae (strain ATCC 204508 / S288c) (Baker's yeast).